A 121-amino-acid chain; its full sequence is Met-lysine-1a (121 aa).

The N-terminal stretch at 1-22 (MKSFVFALALIVAFACISESKS) is a signal peptide. A propeptide spanning residues 23-69 (DHTGYEEEENLEDSELTDLVTAALLEELAEASEMDDLSYTEEAGGER) is cleaved from the precursor. A Methionine amide modification is found at M120.

In terms of tissue distribution, expressed by the venom gland.

It localises to the secreted. Its function is as follows. Shows no antimicrobial activity against Gram-positive bacterium B.subtilis B-501 or Gram-negative bacterium E.coli DH5-alpha at concentrations up to 20 ug/ml. Shows no toxicity towards insect (S.carnaria) larvae. The polypeptide is Met-lysine-1a (Lachesana tarabaevi (Spider)).